We begin with the raw amino-acid sequence, 118 residues long: Large ribosomal subunit protein bL20 (118 aa).

It belongs to the bacterial ribosomal protein bL20 family.

Binds directly to 23S ribosomal RNA and is necessary for the in vitro assembly process of the 50S ribosomal subunit. It is not involved in the protein synthesizing functions of that subunit. The chain is Large ribosomal subunit protein bL20 from Thermosipho africanus (strain TCF52B).